The chain runs to 489 residues: Cysteine--tRNA ligase (489 aa).

Cys29 contributes to the Zn(2+) binding site. The short motif at Val31–His41 is the 'HIGH' region element. Residues Cys215, His240, and Glu244 each contribute to the Zn(2+) site. Residues Lys272–Ser276 carry the 'KMSKS' region motif. Lys275 is a binding site for ATP.

This sequence belongs to the class-I aminoacyl-tRNA synthetase family. In terms of assembly, monomer. The cofactor is Zn(2+).

It localises to the cytoplasm. It catalyses the reaction tRNA(Cys) + L-cysteine + ATP = L-cysteinyl-tRNA(Cys) + AMP + diphosphate. This is Cysteine--tRNA ligase from Trichodesmium erythraeum (strain IMS101).